Consider the following 286-residue polypeptide: Nucleotide-binding protein Sfum_2066 (286 aa).

Residue 8-15 (GLSGSGKS) participates in ATP binding. Residue 59–62 (DIRE) participates in GTP binding.

The protein belongs to the RapZ-like family.

Its function is as follows. Displays ATPase and GTPase activities. This Syntrophobacter fumaroxidans (strain DSM 10017 / MPOB) protein is Nucleotide-binding protein Sfum_2066.